The sequence spans 161 residues: MPSFDVVCEANMVEVKNAVEQANKEISTRFDFKGSDARVEQKEGELTAFADDDFKLGQVKDVLLNKMAKRNVDVRFLDYGKVEKISGDKVKQVITIKKGVTGDLGKKIVRMIKDSKIKVQGSIQGDAVRVSGTKRDDLQSVIAMLRKDVSEAPLDFNNFRD.

Belongs to the YajQ family.

Functionally, nucleotide-binding protein. The chain is Nucleotide-binding protein Reut_A2760 from Cupriavidus pinatubonensis (strain JMP 134 / LMG 1197) (Cupriavidus necator (strain JMP 134)).